Consider the following 258-residue polypeptide: Enoyl-[acyl-carrier-protein] reductase [NADH] FabI (258 aa).

NAD(+) contacts are provided by residues Gly14, 20–21 (SI), 67–68 (DV), and Ile95. Residue Ala98 coordinates substrate. Active-site proton acceptor residues include Tyr148 and Tyr158. NAD(+)-binding positions include Lys165 and 194–198 (IRTLS).

It belongs to the short-chain dehydrogenases/reductases (SDR) family. FabI subfamily. As to quaternary structure, homotetramer.

It catalyses the reaction a 2,3-saturated acyl-[ACP] + NAD(+) = a (2E)-enoyl-[ACP] + NADH + H(+). The enzyme catalyses (2E)-butenoyl-[ACP] + NADH + H(+) = butanoyl-[ACP] + NAD(+). It participates in lipid metabolism; fatty acid biosynthesis. With respect to regulation, inhibited by triclosan and acrylamide. In terms of biological role, catalyzes the reduction of a carbon-carbon double bond in an enoyl moiety that is covalently linked to an acyl carrier protein (ACP). Involved in the elongation cycle of fatty acid which are used in the lipid metabolism. This is Enoyl-[acyl-carrier-protein] reductase [NADH] FabI (fabI) from Bacillus subtilis (strain 168).